The chain runs to 353 residues: Protein CEPU-1 (353 aa).

The first 28 residues, 1–28 (MAQAKMQHPVSWVIFAGMAALLLFQGVP), serve as a signal peptide directing secretion. 3 Ig-like C2-type domains span residues 37 to 124 (PKAM…PKTS), 134 to 216 (PKIT…VKVT), and 220 to 314 (PPYI…ETTT). 3 N-linked (GlcNAc...) asparagine glycosylation sites follow: Asn-42, Asn-68, and Asn-150. An intrachain disulfide couples Cys-55 to Cys-113. Disulfide bonds link Cys-155-Cys-199 and Cys-241-Cys-293. Asn-282, Asn-290, and Asn-303 each carry an N-linked (GlcNAc...) asparagine glycan. Ser-330 carries GPI-anchor amidated serine lipidation. A propeptide spans 331 to 353 (GAWRRGSCAWLLALPLAQLARQF) (removed in mature form).

This sequence belongs to the immunoglobulin superfamily. IgLON family. In terms of assembly, interacts with NEGR1. Found on the dendrites, somata and axons of developing Purkinje cells. Undetectable on other neurons like Golgi or granule cells.

The protein localises to the cell membrane. Functionally, it may be a cellular address molecule specific to Purkinje cells. It may represent a receptor or a subunit of a receptor complex. The sequence is that of Protein CEPU-1 from Gallus gallus (Chicken).